We begin with the raw amino-acid sequence, 260 residues long: NH(3)-dependent NAD(+) synthetase (260 aa).

An ATP-binding site is contributed by 31–38 (GLSGGLDS). Asp37 contacts Mg(2+). Position 112 (Arg112) interacts with deamido-NAD(+). Thr132 contributes to the ATP binding site. Glu137 lines the Mg(2+) pocket. ATP is bound by residues Lys161 and Ser183.

This sequence belongs to the NAD synthetase family. As to quaternary structure, homodimer.

The enzyme catalyses deamido-NAD(+) + NH4(+) + ATP = AMP + diphosphate + NAD(+) + H(+). It participates in cofactor biosynthesis; NAD(+) biosynthesis; NAD(+) from deamido-NAD(+) (ammonia route): step 1/1. Functionally, catalyzes the ATP-dependent amidation of deamido-NAD to form NAD. Uses ammonia as a nitrogen source. This Helicobacter pylori (strain HPAG1) protein is NH(3)-dependent NAD(+) synthetase.